The following is a 555-amino-acid chain: Sulfite reductase [ferredoxin] 2 (555 aa).

Positions 1–31 (MTTARPAKARNEGQWALGNREPLNPNEEMKQ) are disordered. The 3'-(S-cysteinyl)-tyrosine (Tyr-Cys) cross-link spans 69–161 (YTQREQGYDG…AVGLRTTEAC (93 aa)). 4 residues coordinate [4Fe-4S] cluster: C417, C423, C463, and C467. C467 serves as a coordination point for siroheme.

The protein belongs to the nitrite and sulfite reductase 4Fe-4S domain family. In terms of assembly, monomer. Siroheme serves as cofactor. It depends on [4Fe-4S] cluster as a cofactor.

It carries out the reaction hydrogen sulfide + 6 oxidized [2Fe-2S]-[ferredoxin] + 3 H2O = sulfite + 6 reduced [2Fe-2S]-[ferredoxin] + 7 H(+). Its function is as follows. Catalyzes the reduction of sulfite to sulfide, a step in the biosynthesis of sulfur-containing amino acids and cofactors. This chain is Sulfite reductase [ferredoxin] 2 (sir2), found in Mycolicibacterium paratuberculosis (strain ATCC BAA-968 / K-10) (Mycobacterium paratuberculosis).